The following is a 314-amino-acid chain: MNKDNTLYCSAYRIAFFSEIGIGISANSCLLLFHTFMFIRGHRPRLTDLPIGLVALIHLVMLLLAAYITEDFFMSSGGWDDITCKLFIFLHRFFRSLSVCDTCMLSVFQAIILCPQSSHLAKFKLNSPHHLSCFFIFMSIFYTSISSHILIAAIATQNLTSVNLIYITKSCSFLPMSSSMQRTFSTLLAFRNVFLIGLMGLSTCYMATLLCRHKTRSQQLQNSKLSPKATPEQRAIWTILMLMSFFLIISTFDSIMTYSRTIFQGNQSLYCVQIPVAHGYAAFSPLLVLNNEKRLTSLMISMYDRIVRLESLCS.

At 1 to 18 (MNKDNTLYCSAYRIAFFS) the chain is on the extracellular side. A helical membrane pass occupies residues 19-39 (EIGIGISANSCLLLFHTFMFI). Residues 40 to 48 (RGHRPRLTD) lie on the Cytoplasmic side of the membrane. The helical transmembrane segment at 49–69 (LPIGLVALIHLVMLLLAAYIT) threads the bilayer. Over 70 to 88 (EDFFMSSGGWDDITCKLFI) the chain is Extracellular. A disulfide bond links Cys-84 and Cys-171. Residues 89-113 (FLHRFFRSLSVCDTCMLSVFQAIIL) traverse the membrane as a helical segment. Over 114 to 133 (CPQSSHLAKFKLNSPHHLSC) the chain is Cytoplasmic. The helical transmembrane segment at 134 to 154 (FFIFMSIFYTSISSHILIAAI) threads the bilayer. Residues 155–186 (ATQNLTSVNLIYITKSCSFLPMSSSMQRTFST) are Extracellular-facing. N-linked (GlcNAc...) asparagine glycosylation occurs at Asn-158. A helical transmembrane segment spans residues 187–207 (LLAFRNVFLIGLMGLSTCYMA). The Cytoplasmic portion of the chain corresponds to 208–235 (TLLCRHKTRSQQLQNSKLSPKATPEQRA). Residues 236–256 (IWTILMLMSFFLIISTFDSIM) traverse the membrane as a helical segment. Over 257–268 (TYSRTIFQGNQS) the chain is Extracellular. N-linked (GlcNAc...) asparagine glycosylation occurs at Asn-266. A helical membrane pass occupies residues 269–289 (LYCVQIPVAHGYAAFSPLLVL). Over 290-314 (NNEKRLTSLMISMYDRIVRLESLCS) the chain is Cytoplasmic.

Belongs to the G-protein coupled receptor 1 family.

The protein localises to the cell membrane. Putative pheromone receptor implicated in the regulation of social as well as reproductive behavior. This is Vomeronasal type-1 receptor 95 (Vom1r95) from Rattus norvegicus (Rat).